The sequence spans 382 residues: Methylthioribose-1-phosphate isomerase (382 aa).

The Proton donor role is filled by Asp-258.

It belongs to the eIF-2B alpha/beta/delta subunits family. MtnA subfamily.

The protein resides in the cytoplasm. It is found in the nucleus. It carries out the reaction 5-(methylsulfanyl)-alpha-D-ribose 1-phosphate = 5-(methylsulfanyl)-D-ribulose 1-phosphate. The protein operates within amino-acid biosynthesis; L-methionine biosynthesis via salvage pathway; L-methionine from S-methyl-5-thio-alpha-D-ribose 1-phosphate: step 1/6. In terms of biological role, catalyzes the interconversion of methylthioribose-1-phosphate (MTR-1-P) into methylthioribulose-1-phosphate (MTRu-1-P). This is Methylthioribose-1-phosphate isomerase from Laccaria bicolor (strain S238N-H82 / ATCC MYA-4686) (Bicoloured deceiver).